The chain runs to 210 residues: LexA repressor (210 aa).

The H-T-H motif DNA-binding region spans 28-48; it reads FEEIAEGMGLSSLATVHKHIG. Residues Ser131 and Lys169 each act as for autocatalytic cleavage activity in the active site.

This sequence belongs to the peptidase S24 family. As to quaternary structure, homodimer.

The catalysed reaction is Hydrolysis of Ala-|-Gly bond in repressor LexA.. Its function is as follows. Represses a number of genes involved in the response to DNA damage (SOS response), including recA and lexA. In the presence of single-stranded DNA, RecA interacts with LexA causing an autocatalytic cleavage which disrupts the DNA-binding part of LexA, leading to derepression of the SOS regulon and eventually DNA repair. This Koribacter versatilis (strain Ellin345) protein is LexA repressor.